A 250-amino-acid polypeptide reads, in one-letter code: 5'-nucleotidase SurE (250 aa).

A divalent metal cation is bound by residues Asp8, Asp9, Ser40, and Asn94.

This sequence belongs to the SurE nucleotidase family. It depends on a divalent metal cation as a cofactor.

It localises to the cytoplasm. The enzyme catalyses a ribonucleoside 5'-phosphate + H2O = a ribonucleoside + phosphate. Its function is as follows. Nucleotidase that shows phosphatase activity on nucleoside 5'-monophosphates. This is 5'-nucleotidase SurE from Wolbachia pipientis wMel.